The sequence spans 642 residues: uncharacterized protein (642 aa).

Mg(2+) is bound by residues Glu-15 and Asp-118. Residues Val-29–Glu-149 enclose the PINc domain. Residues Asp-510 to Thr-578 enclose the KH domain.

The protein in the N-terminal section; belongs to the PINc/VapC protein family. Requires Mg(2+) as cofactor.

This is an uncharacterized protein from Methanocaldococcus jannaschii (strain ATCC 43067 / DSM 2661 / JAL-1 / JCM 10045 / NBRC 100440) (Methanococcus jannaschii).